Here is a 942-residue protein sequence, read N- to C-terminus: Serine/threonine-protein kinase ATG1 (942 aa).

One can recognise a Protein kinase domain in the interval 11–312 (YVVEKEIGKG…FEEFFNNKIV (302 aa)). Residues 17-25 (IGKGSFATV) and K41 each bind ATP. Catalysis depends on D159, which acts as the Proton acceptor. Residues 435–452 (NSSRVNKLDKSNLSGKSD) show a composition bias toward polar residues. Disordered regions lie at residues 435–454 (NSSR…SDSS), 505–529 (QPHN…SRRA), and 817–836 (NSKP…NDSN). Over residues 515 to 529 (RAPSTTSGGTSSRRA) the composition is skewed to low complexity. The segment covering 819-834 (KPGTHNQSPKSKISND) has biased composition (polar residues).

It belongs to the protein kinase superfamily. Ser/Thr protein kinase family. APG1/unc-51/ULK1 subfamily. Homodimer. Forms a ternary complex with ATG13 and ATG17.

It localises to the cytoplasm. Its subcellular location is the preautophagosomal structure membrane. The catalysed reaction is L-seryl-[protein] + ATP = O-phospho-L-seryl-[protein] + ADP + H(+). It carries out the reaction L-threonyl-[protein] + ATP = O-phospho-L-threonyl-[protein] + ADP + H(+). Functionally, serine/threonine protein kinase involved in the cytoplasm to vacuole transport (Cvt) and found to be essential in autophagy, where it is required for the formation of autophagosomes. Involved in the clearance of protein aggregates which cannot be efficiently cleared by the proteasome. Required for selective autophagic degradation of the nucleus (nucleophagy) as well as for mitophagy which contributes to regulate mitochondrial quantity and quality by eliminating the mitochondria to a basal level to fulfill cellular energy requirements and preventing excess ROS production. Also involved in endoplasmic reticulum-specific autophagic process, in selective removal of ER-associated degradation (ERAD) substrates. Plays a key role in ATG9 and ATG23 cycling through the pre-autophagosomal structure and is necessary to promote ATG18 binding to ATG9 through phosphorylation of ATG9. Catalyzes phosphorylation of ATG4, decreasing the interaction between ATG4 and ATG8 and impairing deconjugation of PE-conjugated forms of ATG8. Contributes to virulence by conferring resistance to unstable nutrient environments and immune defense of hosts. The protein is Serine/threonine-protein kinase ATG1 of Candida glabrata (strain ATCC 2001 / BCRC 20586 / JCM 3761 / NBRC 0622 / NRRL Y-65 / CBS 138) (Yeast).